Here is a 463-residue protein sequence, read N- to C-terminus: Fumarate hydratase class II (463 aa).

Substrate is bound by residues 98 to 100, 129 to 132, 139 to 141, and T187; these read SGT, HPND, and SSN. H188 (proton donor/acceptor) is an active-site residue. S318 is a catalytic residue. Substrate is bound by residues S319 and 324 to 326; that span reads KVN.

This sequence belongs to the class-II fumarase/aspartase family. Fumarase subfamily. In terms of assembly, homotetramer.

Its subcellular location is the cytoplasm. It catalyses the reaction (S)-malate = fumarate + H2O. It participates in carbohydrate metabolism; tricarboxylic acid cycle; (S)-malate from fumarate: step 1/1. In terms of biological role, involved in the TCA cycle. Catalyzes the stereospecific interconversion of fumarate to L-malate. This is Fumarate hydratase class II from Rhizobium meliloti (strain 1021) (Ensifer meliloti).